The primary structure comprises 964 residues: Phosphoenolpyruvate carboxylase (964 aa).

Position 11 is a phosphoserine (Ser11). Active-site residues include His172 and Lys600.

Belongs to the PEPCase type 1 family. Homotetramer. Mg(2+) is required as a cofactor.

The protein resides in the cytoplasm. The catalysed reaction is oxaloacetate + phosphate = phosphoenolpyruvate + hydrogencarbonate. The protein operates within photosynthesis; C4 acid pathway. With respect to regulation, by light-reversible phosphorylation. In terms of biological role, through the carboxylation of phosphoenolpyruvate (PEP) it forms oxaloacetate, a four-carbon dicarboxylic acid source for the tricarboxylic acid cycle. This chain is Phosphoenolpyruvate carboxylase, found in Amaranthus hypochondriacus (Prince-of-Wales feather).